The sequence spans 615 residues: RNA polymerase sigma factor RpoD (615 aa).

The interval 166–216 (GYIDPDDGITPPAAEVPPPVDTKTAKADDDSEDEEAEATEDEEEAESGPDP) is disordered. Residues 194–212 (DDSEDEEAEATEDEEEAES) show a composition bias toward acidic residues. Residues 381–451 (MVEANLRLVI…TRSIADQART (71 aa)) form a sigma-70 factor domain-2 region. The short motif at 405-408 (DLIQ) is the Interaction with polymerase core subunit RpoC element. The sigma-70 factor domain-3 stretch occupies residues 460 to 536 (ETINKLNRIS…DSTMQSPIDV (77 aa)). Residues 549-602 (VLSGLTAREAKVLRMRFGIDMNTDHTLEEVGKQFDVTRERIRQIEAKALRKLRH) form a sigma-70 factor domain-4 region. The segment at residues 575–594 (LEEVGKQFDVTRERIRQIEA) is a DNA-binding region (H-T-H motif).

The protein belongs to the sigma-70 factor family. RpoD/SigA subfamily. As to quaternary structure, interacts transiently with the RNA polymerase catalytic core.

It localises to the cytoplasm. Its function is as follows. Sigma factors are initiation factors that promote the attachment of RNA polymerase to specific initiation sites and are then released. This sigma factor is the primary sigma factor during exponential growth. The sequence is that of RNA polymerase sigma factor RpoD from Pseudomonas protegens (strain DSM 19095 / LMG 27888 / CFBP 6595 / CHA0).